We begin with the raw amino-acid sequence, 589 residues long: Serine/threonine-protein kinase shk2 (589 aa).

One can recognise a PH domain in the interval 23–125 (GIIRSGWVML…WMDLISSRAL (103 aa)). The region spanning 129–142 (VSSPMNPKHQVHVG) is the CRIB domain. In terms of domain architecture, Protein kinase spans 309 to 566 (FNVKHKLGQG…AAELLTHSFL (258 aa)). ATP-binding positions include 315-323 (LGQGASGSV) and Lys343. The Proton acceptor role is filled by Asp434.

The protein belongs to the protein kinase superfamily. STE Ser/Thr protein kinase family. STE20 subfamily.

The catalysed reaction is L-seryl-[protein] + ATP = O-phospho-L-seryl-[protein] + ADP + H(+). It carries out the reaction L-threonyl-[protein] + ATP = O-phospho-L-threonyl-[protein] + ADP + H(+). Forms an activated complex with GTP-bound Ras-like cdc42. Participates in Ras-dependent morphological control and mating response pathways. This Schizosaccharomyces pombe (strain 972 / ATCC 24843) (Fission yeast) protein is Serine/threonine-protein kinase shk2 (shk2).